The following is a 264-amino-acid chain: Thymidylate synthase (264 aa).

Arginine 21 contributes to the dUMP binding site. Position 51 (histidine 51) interacts with (6R)-5,10-methylene-5,6,7,8-tetrahydrofolate. 126–127 (RR) is a dUMP binding site. Cysteine 146 functions as the Nucleophile in the catalytic mechanism. DUMP contacts are provided by residues 166–169 (RSAD), asparagine 177, and 207–209 (HLY). Aspartate 169 contributes to the (6R)-5,10-methylene-5,6,7,8-tetrahydrofolate binding site. Alanine 263 lines the (6R)-5,10-methylene-5,6,7,8-tetrahydrofolate pocket.

Belongs to the thymidylate synthase family. Bacterial-type ThyA subfamily. In terms of assembly, homodimer.

It is found in the cytoplasm. It catalyses the reaction dUMP + (6R)-5,10-methylene-5,6,7,8-tetrahydrofolate = 7,8-dihydrofolate + dTMP. Its pathway is pyrimidine metabolism; dTTP biosynthesis. Catalyzes the reductive methylation of 2'-deoxyuridine-5'-monophosphate (dUMP) to 2'-deoxythymidine-5'-monophosphate (dTMP) while utilizing 5,10-methylenetetrahydrofolate (mTHF) as the methyl donor and reductant in the reaction, yielding dihydrofolate (DHF) as a by-product. This enzymatic reaction provides an intracellular de novo source of dTMP, an essential precursor for DNA biosynthesis. This Chromobacterium violaceum (strain ATCC 12472 / DSM 30191 / JCM 1249 / CCUG 213 / NBRC 12614 / NCIMB 9131 / NCTC 9757 / MK) protein is Thymidylate synthase.